A 734-amino-acid chain; its full sequence is Probable carboxypeptidase X1 (734 aa).

Residues 1–20 (MWGLLLALAAFAPAVGPALG) form the signal peptide. Positions 30–62 (AQPGTTKVPGSTPALHSSPAQPPAETANGTSEQ) are disordered. The segment covering 32 to 48 (PGTTKVPGSTPALHSSP) has biased composition (polar residues). 4 N-linked (GlcNAc...) asparagine glycosylation sites follow: Asn-57, Asn-210, Asn-220, and Asn-318. An F5/8 type C domain is found at 113 to 274 (TGCPPLGLES…PCLRAEILAC (162 aa)). Residues Cys-115 and Cys-274 are joined by a disulfide bond. In terms of domain architecture, Peptidase M14 spans 298-621 (QHHNYKAMRK…DALLTYLEQV (324 aa)). Residues His-360 and Glu-363 each coordinate Zn(2+). Residues Asn-428 and Asn-472 are each glycosylated (N-linked (GlcNAc...) asparagine). His-498 contacts Zn(2+). The active-site Proton donor/acceptor is Glu-591.

This sequence belongs to the peptidase M14 family. It depends on Zn(2+) as a cofactor.

Its subcellular location is the secreted. In terms of biological role, may be involved in cell-cell interactions. No carboxypeptidase activity was found yet. The chain is Probable carboxypeptidase X1 (CPXM1) from Homo sapiens (Human).